A 99-amino-acid polypeptide reads, in one-letter code: NAD(P)H-quinone oxidoreductase subunit 4L, chloroplastic (99 aa).

Helical transmembrane passes span 1–21 (MFEQ…FGLI), 31–51 (MSLE…SNLF), and 59–79 (IFTL…LAIA).

This sequence belongs to the complex I subunit 4L family. As to quaternary structure, NDH is composed of at least 16 different subunits, 5 of which are encoded in the nucleus.

It localises to the plastid. It is found in the chloroplast thylakoid membrane. It carries out the reaction a plastoquinone + NADH + (n+1) H(+)(in) = a plastoquinol + NAD(+) + n H(+)(out). The catalysed reaction is a plastoquinone + NADPH + (n+1) H(+)(in) = a plastoquinol + NADP(+) + n H(+)(out). Its function is as follows. NDH shuttles electrons from NAD(P)H:plastoquinone, via FMN and iron-sulfur (Fe-S) centers, to quinones in the photosynthetic chain and possibly in a chloroplast respiratory chain. The immediate electron acceptor for the enzyme in this species is believed to be plastoquinone. Couples the redox reaction to proton translocation, and thus conserves the redox energy in a proton gradient. The sequence is that of NAD(P)H-quinone oxidoreductase subunit 4L, chloroplastic from Adiantum capillus-veneris (Maidenhair fern).